The chain runs to 301 residues: uncharacterized protein (301 aa).

The next 9 helical transmembrane spans lie at 1–21, 33–53, 72–92, 101–121, 124–144, 185–205, 220–240, 246–266, and 270–290; these read MSWI…LGIV, SVLF…YFYY, AMSL…KIPG, FGII…TILI, FAWL…KTFY, YFTP…VFAI, IIYT…FCLA, FSYI…KIFI, and IAIP…FGII.

Belongs to the TerC family.

Its subcellular location is the cell membrane. This is an uncharacterized protein from Rickettsia felis (strain ATCC VR-1525 / URRWXCal2) (Rickettsia azadi).